The sequence spans 138 residues: Acidic phospholipase A2 (138 aa).

The signal sequence occupies residues 1 to 16; the sequence is MRTLWIVAVLLLGVEG. 7 cysteine pairs are disulfide-bonded: Cys-42-Cys-131, Cys-44-Cys-60, Cys-59-Cys-111, Cys-65-Cys-138, Cys-66-Cys-104, Cys-73-Cys-97, and Cys-91-Cys-102. 3 residues coordinate Ca(2+): Tyr-43, Gly-45, and Gly-47. The active site involves His-63. Asp-64 contributes to the Ca(2+) binding site. The active site involves Asp-105.

It belongs to the phospholipase A2 family. Group II subfamily. D49 sub-subfamily. As to quaternary structure, homodimer. Requires Ca(2+) as cofactor. In terms of tissue distribution, expressed by the venom gland.

Its subcellular location is the secreted. The enzyme catalyses a 1,2-diacyl-sn-glycero-3-phosphocholine + H2O = a 1-acyl-sn-glycero-3-phosphocholine + a fatty acid + H(+). PLA2 catalyzes the calcium-dependent hydrolysis of the 2-acyl groups in 3-sn-phosphoglycerides. The polypeptide is Acidic phospholipase A2 (Crotalus atrox (Western diamondback rattlesnake)).